The following is a 347-amino-acid chain: Isopentenyl-diphosphate delta-isomerase (347 aa).

9-10 (RK) provides a ligand contact to substrate. FMN is bound by residues Ser-67, 68–70 (SMT), Ser-98, and Asn-127. Position 98-100 (98-100 (SQR)) interacts with substrate. A substrate-binding site is contributed by Gln-162. Glu-163 contributes to the Mg(2+) binding site. Residues Lys-194, Thr-224, 274–276 (GIR), and 295–296 (AA) contribute to the FMN site.

The protein belongs to the IPP isomerase type 2 family. Homooctamer. Dimer of tetramers. It depends on FMN as a cofactor. NADPH serves as cofactor. Mg(2+) is required as a cofactor.

Its subcellular location is the cytoplasm. The enzyme catalyses isopentenyl diphosphate = dimethylallyl diphosphate. Involved in the biosynthesis of isoprenoids. Catalyzes the 1,3-allylic rearrangement of the homoallylic substrate isopentenyl (IPP) to its allylic isomer, dimethylallyl diphosphate (DMAPP). The protein is Isopentenyl-diphosphate delta-isomerase of Cronobacter sakazakii (strain ATCC BAA-894) (Enterobacter sakazakii).